The sequence spans 223 residues: Small ribosomal subunit protein uS3 (223 aa).

A KH type-2 domain is found at 39–107 (IRQFLRKKPS…EVWLEIAEIK (69 aa)).

Belongs to the universal ribosomal protein uS3 family. In terms of assembly, part of the 30S ribosomal subunit. Forms a tight complex with proteins S10 and S14.

Functionally, binds the lower part of the 30S subunit head. Binds mRNA in the 70S ribosome, positioning it for translation. The sequence is that of Small ribosomal subunit protein uS3 from Chlamydia pneumoniae (Chlamydophila pneumoniae).